The following is a 298-amino-acid chain: U1 small nuclear ribonucleoprotein A (298 aa).

RRM domains lie at 2-113 (SALY…KART) and 227-298 (KVLL…GFAK).

Belongs to the RRM U1 A/B'' family. Component of the spliceosome where it is associated with snRNP U1.

Its subcellular location is the nucleus. Its function is as follows. Involved in nuclear mRNA splicing. The principal role of the U1A is to help fold or maintain U1 RNA in an active configuration. It is the first snRNP to interact with pre-mRNA. This interaction is required for the subsequent binding of U2 snRNP and the U4/U6/U5 tri-snRNP. The sequence is that of U1 small nuclear ribonucleoprotein A (MUD1) from Saccharomyces cerevisiae (strain ATCC 204508 / S288c) (Baker's yeast).